The chain runs to 383 residues: Protein delta homolog 2 (383 aa).

Residues 1–26 (MPSGCRCLHLVCLLCILAAPVKPVRA) form the signal peptide. 4 EGF-like domains span residues 27–58 (DDCS…LHCE), 62–89 (RMPG…KFCD), 91–129 (DEHV…RDCE), and 131–172 (KEGP…AHCE). At 27–306 (DDCSSHCDLA…RQEAGLGKSS (280 aa)) the chain is on the extracellular side. 17 disulfides stabilise this stretch: cysteine 29/cysteine 40, cysteine 33/cysteine 46, cysteine 48/cysteine 57, cysteine 66/cysteine 71, cysteine 79/cysteine 88, cysteine 95/cysteine 107, cysteine 101/cysteine 117, cysteine 119/cysteine 128, cysteine 135/cysteine 148, cysteine 142/cysteine 160, cysteine 162/cysteine 171, cysteine 178/cysteine 189, cysteine 183/cysteine 198, cysteine 200/cysteine 209, cysteine 216/cysteine 227, cysteine 221/cysteine 236, and cysteine 238/cysteine 247. Asparagine 157 carries an N-linked (GlcNAc...) asparagine glycan. The EGF-like 5; calcium-binding domain maps to 174–210 (NVDDCLMRPCANGATCLDGINRFSCLCPEGFAGRFCT). Positions 212 to 248 (NLDDCASRPCQRGARCRDRVHDFDCLCPSGYGGKTCE) constitute an EGF-like 6; calcium-binding domain. The helical transmembrane segment at 307 to 327 (LVAVVVFGAVTATLVLSTVLL) threads the bilayer. The Cytoplasmic segment spans residues 328-383 (TLRAWRRGVCPPGPCCYPAPHYAPARQDQECQVSMLPAGLPLPPDLPPEPGKTTAL).

The protein localises to the membrane. Its function is as follows. Regulates adipogenesis. The chain is Protein delta homolog 2 (DLK2) from Sus scrofa (Pig).